We begin with the raw amino-acid sequence, 118 residues long: Cytochrome b-c1 complex subunit 7 (118 aa).

The interval 1–32 (MVHLTKTLRFINNPGFRKFYYGLQGYNKYGLY) is igE-binding. Immunodominant epitope; induces specific IgE antibody production in mice. Causes degranulation of rat basophilic leukemia (RBL) cells and the release of beta-hexosaminidase from them.

This sequence belongs to the UQCRB/QCR7 family. In terms of assembly, component of the ubiquinol-cytochrome c oxidoreductase (cytochrome b-c1 complex, complex III, CIII), a multisubunit enzyme composed of 3 respiratory subunits cytochrome b, cytochrome c1 and Rieske protein, 2 core protein subunits, and additional low-molecular weight protein subunits. The complex exists as an obligatory dimer and forms supercomplexes (SCs) in the inner mitochondrial membrane with cytochrome c oxidase (complex IV, CIV).

The protein localises to the mitochondrion inner membrane. In terms of biological role, component of the ubiquinol-cytochrome c oxidoreductase, a multisubunit transmembrane complex that is part of the mitochondrial electron transport chain which drives oxidative phosphorylation. The respiratory chain contains 3 multisubunit complexes succinate dehydrogenase (complex II, CII), ubiquinol-cytochrome c oxidoreductase (cytochrome b-c1 complex, complex III, CIII) and cytochrome c oxidase (complex IV, CIV), that cooperate to transfer electrons derived from NADH and succinate to molecular oxygen, creating an electrochemical gradient over the inner membrane that drives transmembrane transport and the ATP synthase. The cytochrome b-c1 complex catalyzes electron transfer from ubiquinol to cytochrome c, linking this redox reaction to translocation of protons across the mitochondrial inner membrane, with protons being carried across the membrane as hydrogens on the quinol. In the process called Q cycle, 2 protons are consumed from the matrix, 4 protons are released into the intermembrane space and 2 electrons are passed to cytochrome c. This chain is Cytochrome b-c1 complex subunit 7, found in Dermatophagoides pteronyssinus (European house dust mite).